Consider the following 157-residue polypeptide: Small heat shock protein ibp (157 aa).

The region spanning 35–148 is the sHSP domain; sequence EKPISDTPTY…KPKKISINVP (114 aa).

It belongs to the small heat shock protein (HSP20) family.

This is Small heat shock protein ibp (ibp) from Buchnera aphidicola subsp. Acyrthosiphon pisum (strain APS) (Acyrthosiphon pisum symbiotic bacterium).